The sequence spans 123 residues: Keratin-associated protein 2-2 (123 aa).

Residues 5-112 are 11 X 5 AA repeats of C-C-[CDPQRWG]-[APRS]-[CIPSTVD]; the sequence is CCGSTFSSLS…SVQSPCGQPT (108 aa).

Belongs to the KRTAP type 2 family. As to quaternary structure, interacts with hair keratins.

Its function is as follows. In the hair cortex, hair keratin intermediate filaments are embedded in an interfilamentous matrix, consisting of hair keratin-associated proteins (KRTAP), which are essential for the formation of a rigid and resistant hair shaft through their extensive disulfide bond cross-linking with abundant cysteine residues of hair keratins. The matrix proteins include the high-sulfur and high-glycine-tyrosine keratins. The polypeptide is Keratin-associated protein 2-2 (KRTAP2-2) (Homo sapiens (Human)).